The primary structure comprises 253 residues: Proteasome subunit alpha type-7 (253 aa).

It belongs to the peptidase T1A family. The 26S proteasome consists of a 20S proteasome core and two 19S regulatory subunits. The 20S proteasome core is composed of 28 subunits that are arranged in four stacked rings, resulting in a barrel-shaped structure. The two end rings are each formed by seven alpha subunits, and the two central rings are each formed by seven beta subunits. The catalytic chamber with the active sites is on the inside of the barrel.

The protein localises to the cytoplasm. It is found in the nucleus. Its function is as follows. The proteasome is a multicatalytic proteinase complex which is characterized by its ability to cleave peptides with Arg, Phe, Tyr, Leu, and Glu adjacent to the leaving group at neutral or slightly basic pH. The proteasome has an ATP-dependent proteolytic activity. This Caenorhabditis elegans protein is Proteasome subunit alpha type-7 (pas-4).